We begin with the raw amino-acid sequence, 270 residues long: Tetraspanin-17 (270 aa).

The Cytoplasmic portion of the chain corresponds to 1-19 (MPGKHQHFQEPEVGCCGKY). A helical transmembrane segment spans residues 20 to 40 (FLFGFNIVFWVLGALFLAIGL). At 41 to 63 (WAWSEKGVLSNISALTDLGGLDP) the chain is on the extracellular side. N-linked (GlcNAc...) asparagine glycosylation is present at Asn51. The helical transmembrane segment at 64 to 84 (VWLFVVVGGVMSVLGFAGCIG) threads the bilayer. The Cytoplasmic segment spans residues 85 to 94 (ALRENTFLLK). The chain crosses the membrane as a helical span at residues 95-115 (FFSVFLGLIFFLELATGILAF). Over 116–234 (VFKDWIRDQL…GQFEKWLQDN (119 aa)) the chain is Extracellular. 4 disulfide bridges follow: Cys155-Cys223, Cys156-Cys188, Cys172-Cys182, and Cys189-Cys202. An N-linked (GlcNAc...) asparagine glycan is attached at Asn171. A helical transmembrane segment spans residues 235–255 (LIVVAGVFVGIALLQIFGICL). At 256-270 (AQNLVSDIKAVKANW) the chain is on the cytoplasmic side.

Belongs to the tetraspanin (TM4SF) family. As to quaternary structure, interacts with ADAM10; the interaction influences ADAM10 substrate specificity, endocytosis and turnover.

Its subcellular location is the cell membrane. Part of TspanC8 subgroup, composed of 6 members that interact with the transmembrane metalloprotease ADAM10. This interaction is required for ADAM10 exit from the endoplasmic reticulum and for enzymatic maturation and trafficking to the cell surface as well as substrate specificity. Different TspanC8/ADAM10 complexes have distinct substrates. Seems to regulate VE-cadherin expression in endothelial cells probably through interaction with ADAM10, promoting leukocyte transmigration. This is Tetraspanin-17 (TSPAN17) from Bos taurus (Bovine).